We begin with the raw amino-acid sequence, 491 residues long: Feruloyl-CoA synthase (491 aa).

Residue T154 participates in Mg(2+) binding. 3 residues coordinate ATP: A199, G291, and T295. Mg(2+) is bound at residue E296. Positions 374 and 391 each coordinate ATP.

It belongs to the ATP-dependent AMP-binding enzyme family. It depends on Mg(2+) as a cofactor.

The catalysed reaction is (E)-ferulate + ATP + CoA = (E)-feruloyl-CoA + AMP + diphosphate. Its function is as follows. Catalyzes the formation of (E)-feruloyl-CoA, AMP and diphosphate from (E)-ferulate, CoA and ATP. Involved in the degradation pathway of lignin-derived aromatic compounds of plant cell walls. Catalyzes the first enzymatic step in the conversion of ferulic acid into high value compound vanillin. The chain is Feruloyl-CoA synthase from Amycolatopsis sp.